The chain runs to 413 residues: Acyltransferase mokF (413 aa).

Arg-93 lines the monacolin J pocket. Residue Ser-96 is the Acyl-ester intermediate of the active site. Monacolin J-binding residues include Arg-193, Tyr-208, and Tyr-278. Gly-386 contacts 2-methylbutanoate.

It belongs to the class-A beta-lactamase family.

It catalyses the reaction monacolin J carboxylate + (S)-2-methylbutanoyl-[2-methylbutanoate polyketide synthase] = lovastatin carboxylate + holo-[2-methylbutanoate polyketide synthase]. The protein operates within polyketide biosynthesis; lovastatin biosynthesis. Acyltransferase; part of the gene cluster that mediates the biosynthesis of monakolin K, also known as lovastatin, and which acts as a potent competitive inhibitor of HMG-CoA reductase. Monakolin K biosynthesis is performed in two stages. The first stage is catalyzed by the nonaketide synthase mokA, which belongs to type I polyketide synthases and catalyzes the iterative nine-step formation of the polyketide. This PKS stage is completed by the action of dehydrogenase mokE, which catalyzes the NADPH-dependent reduction of the unsaturated tetra-, penta- and heptaketide intermediates that arise during the mokA-mediated biosynthesis of the nonaketide chain and leads to dihydromonacolin L. Covalently bound dihydromonacolin L is released from mokA by the mokD esterase. Conversion of dihydromonacolin L into monacolin L and then monacolin J is subsequently performed with the participation of molecular oxygen and P450 monoogygenase mokC. Finally, mokF performs the conversion of monacoline J to monacoline K through the addition of the side-chain diketide moiety (2R)-2-methylbutanoate produced by the diketide synthase mokB. This Monascus pilosus (Red mold) protein is Acyltransferase mokF.